Here is a 653-residue protein sequence, read N- to C-terminus: DUF21 domain-containing protein At1g55930, chloroplastic (653 aa).

A chloroplast-targeting transit peptide spans Met-1–Val-72. Helical transmembrane passes span Gly-103–Ala-123, Gly-157–Ile-177, Phe-208–Thr-228, Ile-234–Leu-254, and Trp-280–Leu-300. Residues Val-149–Glu-335 enclose the CNNM transmembrane domain. CBS domains lie at Met-354–Ser-415 and Met-421–Glu-479.

It localises to the plastid. Its subcellular location is the chloroplast membrane. This is DUF21 domain-containing protein At1g55930, chloroplastic (CBSDUFCH2) from Arabidopsis thaliana (Mouse-ear cress).